The sequence spans 494 residues: Aldehyde dehydrogenase (494 aa).

Residue 223 to 228 coordinates NAD(+); it reads GSTTAG. Catalysis depends on residues Glu-245 and Cys-279.

It belongs to the aldehyde dehydrogenase family.

It catalyses the reaction an aldehyde + NAD(+) + H2O = a carboxylate + NADH + 2 H(+). It participates in mycotoxin biosynthesis. Aldehyde dehydrogenase; part of the gene cluster that mediates the biosynthesis of the selective antifungal agent ascochitine, an o-quinone methide that plays a possible protective role against other microbial competitors in nature and is considered to be important for pathogenicity of legume-associated Didymella species. The pathway probably begins with the synthesis of a keto-aldehyde intermediate by the ascochitine non-reducing polyketide synthase pksAC from successive condensations of 4 malonyl-CoA units, presumably with a simple acetyl-CoA starter unit. Release of the keto-aldehyde intermediate is consistent with the presence of the C-terminal reductive release domain. The HR-PKS (orf7) probably makes a diketide starter unit which is passed to the non-reducing polyketide synthase pksAC for further extension, producing ascochital and ascochitine. The aldehyde dehydrogenase (orf1), the 2-oxoglutarate-dependent dioxygenase (orf3) and the dehydrogenase (orf9) are probably involved in subsequent oxidations of methyl groups to the carboxylic acid of the heterocyclic ring. The ascochitine gene cluster also includes a gene encoding a short peptide with a cupin domain (orf2) that is often found in secondary metabolite gene clusters and which function has still to be determined. The protein is Aldehyde dehydrogenase of Didymella fabae (Leaf and pod spot disease fungus).